The primary structure comprises 429 residues: MHNIFLLSLGCSKNTVDSERLMAQAAASGMIFTEFADDADIILINTCGFIQDAKEESIAETLAAIRKKQDEKVRKVYVMGCLPELYRKELADEMPEIDGFFGTRELPDVLRAIGAEYREELLDRRILLTPPHYAFLKIAEGCNRQCSFCSIPKIRGRYVSQPPEQLLREAALLRQSGVRELNLIAQDISVYGCDLDGSSLLNDLVLRLSDMEFERIRLLYAYPLNFPMEVIDTMRERENVCNYLDMPLQHISDRILRSMNRGIDSTGTVRLIESIRQRNPDIRLRTTMIAGYPGETGEEFEELLQFVAETRFDRLGCFPYSHEEHSPAYRLEDDVIPEKKQDRVAELMELQETISQEKNREFEGNEIVVLVDQVEENMVFGRTEYDAPEVDNECILETGNFDVRPGMFCRARITDSTPYDLEGEVIGIG.

One can recognise an MTTase N-terminal domain in the interval 2–118 (HNIFLLSLGC…VLRAIGAEYR (117 aa)). Residues Cys-11, Cys-47, Cys-81, Cys-142, Cys-146, and Cys-149 each coordinate [4Fe-4S] cluster. The Radical SAM core domain maps to 128–357 (LTPPHYAFLK…MELQETISQE (230 aa)). The TRAM domain occupies 360 to 427 (REFEGNEIVV…PYDLEGEVIG (68 aa)).

It belongs to the methylthiotransferase family. RimO subfamily. Requires [4Fe-4S] cluster as cofactor.

It is found in the cytoplasm. It catalyses the reaction L-aspartate(89)-[ribosomal protein uS12]-hydrogen + (sulfur carrier)-SH + AH2 + 2 S-adenosyl-L-methionine = 3-methylsulfanyl-L-aspartate(89)-[ribosomal protein uS12]-hydrogen + (sulfur carrier)-H + 5'-deoxyadenosine + L-methionine + A + S-adenosyl-L-homocysteine + 2 H(+). In terms of biological role, catalyzes the methylthiolation of an aspartic acid residue of ribosomal protein uS12. The chain is Ribosomal protein uS12 methylthiotransferase RimO from Chlorobium limicola (strain DSM 245 / NBRC 103803 / 6330).